The chain runs to 703 residues: Phosphoribosylformylglycinamidine synthase subunit PurL (703 aa).

The active site involves His36. ATP-binding residues include Tyr39 and Lys80. Mg(2+) is bound at residue Glu82. Substrate is bound by residues 83–86 (SHNH) and Arg105. His84 (proton acceptor) is an active-site residue. A Mg(2+)-binding site is contributed by Asp106. Gln226 provides a ligand contact to substrate. Mg(2+) is bound at residue Asp252. Substrate is bound at residue 294–296 (ETQ). Asp468 and Gly505 together coordinate ATP. Ser508 contributes to the substrate binding site.

The protein belongs to the FGAMS family. As to quaternary structure, monomer. Part of the FGAM synthase complex composed of 1 PurL, 1 PurQ and 2 PurS subunits.

It localises to the cytoplasm. It catalyses the reaction N(2)-formyl-N(1)-(5-phospho-beta-D-ribosyl)glycinamide + L-glutamine + ATP + H2O = 2-formamido-N(1)-(5-O-phospho-beta-D-ribosyl)acetamidine + L-glutamate + ADP + phosphate + H(+). It functions in the pathway purine metabolism; IMP biosynthesis via de novo pathway; 5-amino-1-(5-phospho-D-ribosyl)imidazole from N(2)-formyl-N(1)-(5-phospho-D-ribosyl)glycinamide: step 1/2. In terms of biological role, part of the phosphoribosylformylglycinamidine synthase complex involved in the purines biosynthetic pathway. Catalyzes the ATP-dependent conversion of formylglycinamide ribonucleotide (FGAR) and glutamine to yield formylglycinamidine ribonucleotide (FGAM) and glutamate. The FGAM synthase complex is composed of three subunits. PurQ produces an ammonia molecule by converting glutamine to glutamate. PurL transfers the ammonia molecule to FGAR to form FGAM in an ATP-dependent manner. PurS interacts with PurQ and PurL and is thought to assist in the transfer of the ammonia molecule from PurQ to PurL. The polypeptide is Phosphoribosylformylglycinamidine synthase subunit PurL (Sulfurisphaera tokodaii (strain DSM 16993 / JCM 10545 / NBRC 100140 / 7) (Sulfolobus tokodaii)).